A 484-amino-acid chain; its full sequence is tRNA sulfurtransferase (484 aa).

The THUMP domain maps to 63 to 167 (REMIERLCCT…DQRLFVVHRQ (105 aa)). ATP contacts are provided by residues 185–186 (LM), lysine 267, glycine 289, and glutamine 298. A disulfide bridge connects residues cysteine 346 and cysteine 457. One can recognise a Rhodanese domain in the interval 405-483 (ALAGQIVLDI…GHANVRVYRP (79 aa)). The active-site Cysteine persulfide intermediate is cysteine 457.

This sequence belongs to the ThiI family.

It is found in the cytoplasm. The enzyme catalyses [ThiI sulfur-carrier protein]-S-sulfanyl-L-cysteine + a uridine in tRNA + 2 reduced [2Fe-2S]-[ferredoxin] + ATP + H(+) = [ThiI sulfur-carrier protein]-L-cysteine + a 4-thiouridine in tRNA + 2 oxidized [2Fe-2S]-[ferredoxin] + AMP + diphosphate. It catalyses the reaction [ThiS sulfur-carrier protein]-C-terminal Gly-Gly-AMP + S-sulfanyl-L-cysteinyl-[cysteine desulfurase] + AH2 = [ThiS sulfur-carrier protein]-C-terminal-Gly-aminoethanethioate + L-cysteinyl-[cysteine desulfurase] + A + AMP + 2 H(+). It participates in cofactor biosynthesis; thiamine diphosphate biosynthesis. In terms of biological role, catalyzes the ATP-dependent transfer of a sulfur to tRNA to produce 4-thiouridine in position 8 of tRNAs, which functions as a near-UV photosensor. Also catalyzes the transfer of sulfur to the sulfur carrier protein ThiS, forming ThiS-thiocarboxylate. This is a step in the synthesis of thiazole, in the thiamine biosynthesis pathway. The sulfur is donated as persulfide by IscS. In Azotobacter vinelandii (strain DJ / ATCC BAA-1303), this protein is tRNA sulfurtransferase.